Reading from the N-terminus, the 339-residue chain is NADH-quinone oxidoreductase subunit H (339 aa).

The next 9 membrane-spanning stretches (helical) occupy residues 10–30 (FPLT…ILCV), 50–70 (PNVV…KLLF), 82–102 (ILFI…WAVI), 115–135 (VGVL…IIAG), 161–181 (MGLV…SGII), 187–207 (LPWW…ISVL), 235–255 (MGFA…SAMT), 275–295 (IPGF…FLWI), and 311–331 (GWKV…SVLF).

It belongs to the complex I subunit 1 family. As to quaternary structure, NDH-1 is composed of 14 different subunits. Subunits NuoA, H, J, K, L, M, N constitute the membrane sector of the complex.

It localises to the cell inner membrane. It catalyses the reaction a quinone + NADH + 5 H(+)(in) = a quinol + NAD(+) + 4 H(+)(out). NDH-1 shuttles electrons from NADH, via FMN and iron-sulfur (Fe-S) centers, to quinones in the respiratory chain. The immediate electron acceptor for the enzyme in this species is believed to be ubiquinone. Couples the redox reaction to proton translocation (for every two electrons transferred, four hydrogen ions are translocated across the cytoplasmic membrane), and thus conserves the redox energy in a proton gradient. This subunit may bind ubiquinone. This Rickettsia prowazekii (strain Madrid E) protein is NADH-quinone oxidoreductase subunit H.